The following is an 87-amino-acid chain: Small ribosomal subunit protein bS20 (87 aa).

Residues 1 to 19 (MANHKSALKRHRQSIKRNL) are compositionally biased toward basic residues. Residues 1 to 22 (MANHKSALKRHRQSIKRNLRNN) are disordered.

It belongs to the bacterial ribosomal protein bS20 family.

Its function is as follows. Binds directly to 16S ribosomal RNA. This Maridesulfovibrio salexigens (strain ATCC 14822 / DSM 2638 / NCIMB 8403 / VKM B-1763) (Desulfovibrio salexigens) protein is Small ribosomal subunit protein bS20.